The primary structure comprises 253 residues: Small ribosomal subunit protein eS6 (253 aa).

The segment at 200–253 (KKRLAKRKQSENDYAKLLAQRKKESKVRRQEELKRRRSASMRDSKSSDKSAPQK) is disordered. A compositionally biased stretch (basic and acidic residues) spans 226–247 (VRRQEELKRRRSASMRDSKSSD).

The protein belongs to the eukaryotic ribosomal protein eS6 family. As to quaternary structure, component of the small ribosomal subunit. Part of the small subunit (SSU) processome, composed of more than 70 proteins and the RNA chaperone small nucleolar RNA (snoRNA) U3. In terms of processing, ribosomal protein S6 is the major substrate of protein kinases in eukaryote ribosomes.

It localises to the cytoplasm. The protein resides in the nucleus. The protein localises to the nucleolus. In terms of biological role, component of the 40S small ribosomal subunit. Plays an important role in controlling cell growth and proliferation through the selective translation of particular classes of mRNA. Part of the small subunit (SSU) processome, first precursor of the small eukaryotic ribosomal subunit. During the assembly of the SSU processome in the nucleolus, many ribosome biogenesis factors, an RNA chaperone and ribosomal proteins associate with the nascent pre-rRNA and work in concert to generate RNA folding, modifications, rearrangements and cleavage as well as targeted degradation of pre-ribosomal RNA by the RNA exosome. In Spodoptera frugiperda (Fall armyworm), this protein is Small ribosomal subunit protein eS6 (RpS6).